Consider the following 679-residue polypeptide: Glycine--tRNA ligase beta subunit (679 aa).

Belongs to the class-II aminoacyl-tRNA synthetase family. Tetramer of two alpha and two beta subunits.

The protein localises to the cytoplasm. The catalysed reaction is tRNA(Gly) + glycine + ATP = glycyl-tRNA(Gly) + AMP + diphosphate. The polypeptide is Glycine--tRNA ligase beta subunit (Streptococcus pyogenes serotype M6 (strain ATCC BAA-946 / MGAS10394)).